Reading from the N-terminus, the 945-residue chain is MSNKKADSKPQSRYPVNLLDTPFPMRGDLPKREPQWVKEWQERKVYETIRAASKGRKKFILHDGPPYANGDIHLGHAVNKILKDMIVKARNLAGFDAVYVPGWDCHGMPIEIQIEKQFGKSLPAAEVMQKARAYATEQIEKQKVGFRRLGVLGDWDNPYKTMNFTNEAGEIRALAKIMEKGYVFRGLKPVNWCFDCGSALAEAEVEYKDKTDPTIDVLFSFAEPEKTAQAFGLNALPRNEGGIVIWTTTPWTIPANQALNLHPEIVYALVDTSRGLLILAQERVEACLKQYGLEGTIVATTPGAKLVNLRFNHPLASAHPSYKRTSPVYLGDYVTTESGTGVVHSSPAYGVEDFVSCKAHGMSDSDIINPVMGDGRYIESLALFGGLSIWAANPQIVEALQGAGTLMRTENYTHSYMHCWRHKTPIIYRATSQWFAGMDVKPNDTDRTLRETALEGIENTAFYPAWGKQRLFSMIANRPDWTLSRQRQWGVPMAFFVHKETGELHPRTLELLEEVAQRVEKAGIEAWQSLDPRELLGDEANMYEKNRDTLDVWFDSGTTHWHVLRGSHKDELQFPADLYLEGSDQHRGWFHSSLLTASMLDGRPPYNALLTHGFTVDGEGRKMSKSLGNGIDPHEVANRLGAEIIRLWIASTDYSGELAISEEILKRVTEGYRRIRNTLRFLLANLSDFDFAQHARPVEDWLEIDRYAVALSANLQNDILSHYEKYEFHPVVAKLQTFCSEDLGGFYLDVLKDRLYTTAADSVARRAAQTALYHIAHGLLRLMAPFLSFTAEEAWKIFEPNSETIFTETYHAFPAVPEAGALLDKWTLLRAARSDVTKALEEARVANLIGSSLQAEVEIRASGARYDALTSLGDDLKFVLITSAASVVKVDSEAEEGVEVIASKYLKCERCWHYRADVGANAEHPTLCGRCFSNLFGNGETRSAA.

Positions 66-76 (PYANGDIHLGH) match the 'HIGH' region motif. Glutamate 581 serves as a coordination point for L-isoleucyl-5'-AMP. The short motif at 622–626 (KMSKS) is the 'KMSKS' region element. Lysine 625 contributes to the ATP binding site. Cysteine 908, cysteine 911, cysteine 928, and cysteine 931 together coordinate Zn(2+).

The protein belongs to the class-I aminoacyl-tRNA synthetase family. IleS type 1 subfamily. In terms of assembly, monomer. Requires Zn(2+) as cofactor.

Its subcellular location is the cytoplasm. The enzyme catalyses tRNA(Ile) + L-isoleucine + ATP = L-isoleucyl-tRNA(Ile) + AMP + diphosphate. Catalyzes the attachment of isoleucine to tRNA(Ile). As IleRS can inadvertently accommodate and process structurally similar amino acids such as valine, to avoid such errors it has two additional distinct tRNA(Ile)-dependent editing activities. One activity is designated as 'pretransfer' editing and involves the hydrolysis of activated Val-AMP. The other activity is designated 'posttransfer' editing and involves deacylation of mischarged Val-tRNA(Ile). The chain is Isoleucine--tRNA ligase from Paraburkholderia xenovorans (strain LB400).